Reading from the N-terminus, the 319-residue chain is 2,3,4,5-tetrahydropyridine-2,6-dicarboxylate N-succinyltransferase (319 aa).

The Mg(2+) site is built by aspartate 167 and glutamate 184. Glutamate 200 (acyl-anhydride intermediate) is an active-site residue. Residues arginine 202, glycine 217, serine 220, alanine 243, 258–259 (EA), and lysine 278 contribute to the succinyl-CoA site.

It belongs to the type 2 tetrahydrodipicolinate N-succinyltransferase family. Homotrimer.

The protein resides in the cytoplasm. The enzyme catalyses (S)-2,3,4,5-tetrahydrodipicolinate + succinyl-CoA + H2O = (S)-2-succinylamino-6-oxoheptanedioate + CoA. The protein operates within amino-acid biosynthesis; L-lysine biosynthesis via DAP pathway; LL-2,6-diaminopimelate from (S)-tetrahydrodipicolinate (succinylase route): step 1/3. Functionally, catalyzes the conversion of the cyclic tetrahydrodipicolinate (THDP) into the acyclic N-succinyl-L-2-amino-6-oxopimelate using succinyl-CoA. This chain is 2,3,4,5-tetrahydropyridine-2,6-dicarboxylate N-succinyltransferase, found in Salinispora tropica (strain ATCC BAA-916 / DSM 44818 / JCM 13857 / NBRC 105044 / CNB-440).